Reading from the N-terminus, the 236-residue chain is MPRSKRSKLVTLAQTDKKGRENKERIFDEVREALDTYRYVWVLHLDDVRTPVLQEIRTSWAGSKLIMGKRKVLQKALGEKREEEYKENLYQLSKLCSGVTGLLFTDEDVNTVKEYFKSYVRSDYSRPNTKAPLTFTIPEGIVYSRGGQIPAEEDVPMIHSLEPTMRNKFEIPTKIKAGKITIDSPYLVCTEGEKLDVRQALILKQFGIAASEFKVKVSAYYDNDSSTVESTNINME.

Belongs to the universal ribosomal protein uL10 family. As to quaternary structure, associates with the pre-60S ribosomal particle.

The protein resides in the nucleus. It localises to the nucleolus. The protein localises to the cytoplasm. Its function is as follows. Component of the ribosome assembly machinery. Nuclear paralog of the ribosomal protein P0, it binds pre-60S subunits at an early stage of assembly in the nucleolus, and is replaced by P0 in cytoplasmic pre-60S subunits and mature 80S ribosomes. This chain is Ribosome assembly factor MRT4, found in Saccharomyces cerevisiae (strain ATCC 204508 / S288c) (Baker's yeast).